The sequence spans 159 residues: MATLWRLSVLCGARGGGALVLRTSVVRPAHVSAFLQDRHTPGWCGVQHIHLSPSHQASSKAASLHWTGERVVSVLLLGLLPAAYLNPCSAMDYSLAAALTLHGHWGIGQVVTDYVRGDALQKVAKAGLLALSAFTFAGLCYFNYHDVGICKAVAMLWKL.

The N-terminal 36 residues, 1–36, are a transit peptide targeting the mitochondrion; sequence MATLWRLSVLCGARGGGALVLRTSVVRPAHVSAFLQ. The Mitochondrial matrix portion of the chain corresponds to 37–63; that stretch reads DRHTPGWCGVQHIHLSPSHQASSKAAS. A helical transmembrane segment spans residues 64–85; sequence LHWTGERVVSVLLLGLLPAAYL. The Mitochondrial intermembrane portion of the chain corresponds to 86–90; sequence NPCSA. The helical transmembrane segment at 91–111 threads the bilayer; the sequence is MDYSLAAALTLHGHWGIGQVV. Position 102 (H102) interacts with heme b. Residues 112–120 lie on the Mitochondrial matrix side of the membrane; it reads TDYVRGDAL. Y114 provides a ligand contact to a ubiquinone. A helical transmembrane segment spans residues 121-142; the sequence is QKVAKAGLLALSAFTFAGLCYF. The Mitochondrial intermembrane segment spans residues 143 to 159; sequence NYHDVGICKAVAMLWKL.

The protein belongs to the CybS family. Component of complex II composed of four subunits: the flavoprotein (FP) SDHA, iron-sulfur protein (IP) SDHB, and a cytochrome b560 composed of SDHC and SDHD.

It localises to the mitochondrion inner membrane. It participates in carbohydrate metabolism; tricarboxylic acid cycle. Membrane-anchoring subunit of succinate dehydrogenase (SDH) that is involved in complex II of the mitochondrial electron transport chain and is responsible for transferring electrons from succinate to ubiquinone (coenzyme Q). SDH also oxidizes malate to the non-canonical enol form of oxaloacetate, enol-oxaloacetate. Enol-oxaloacetate, which is a potent inhibitor of the succinate dehydrogenase activity, is further isomerized into keto-oxaloacetate. In Sus scrofa (Pig), this protein is Succinate dehydrogenase [ubiquinone] cytochrome b small subunit, mitochondrial (SDHD).